The primary structure comprises 546 residues: Chaperonin GroEL (546 aa).

Residues 30 to 33, Lys-51, 87 to 91, Gly-415, 479 to 481, and Asp-495 each bind ATP; these read TLGP, DGTTT, and NAA.

The protein belongs to the chaperonin (HSP60) family. Forms a cylinder of 14 subunits composed of two heptameric rings stacked back-to-back. Interacts with the co-chaperonin GroES.

The protein resides in the cytoplasm. The enzyme catalyses ATP + H2O + a folded polypeptide = ADP + phosphate + an unfolded polypeptide.. Together with its co-chaperonin GroES, plays an essential role in assisting protein folding. The GroEL-GroES system forms a nano-cage that allows encapsulation of the non-native substrate proteins and provides a physical environment optimized to promote and accelerate protein folding. The protein is Chaperonin GroEL of Stutzerimonas stutzeri (strain A1501) (Pseudomonas stutzeri).